Here is a 480-residue protein sequence, read N- to C-terminus: Ribosomal protein uS12 methylthiotransferase RimO (480 aa).

The MTTase N-terminal domain occupies 37 to 147; the sequence is NRIGFVSLGC…VLKHVHKYVP (111 aa). 6 residues coordinate [4Fe-4S] cluster: cysteine 46, cysteine 82, cysteine 111, cysteine 179, cysteine 183, and cysteine 186. The 238-residue stretch at 165–402 folds into the Radical SAM core domain; the sequence is LTPKHYAYLK…MEVQAEISAE (238 aa). Positions 405–471 constitute a TRAM domain; it reads ARFVGRTMDI…EHDLWAELVD (67 aa).

It belongs to the methylthiotransferase family. RimO subfamily. The cofactor is [4Fe-4S] cluster.

It is found in the cytoplasm. The enzyme catalyses L-aspartate(89)-[ribosomal protein uS12]-hydrogen + (sulfur carrier)-SH + AH2 + 2 S-adenosyl-L-methionine = 3-methylsulfanyl-L-aspartate(89)-[ribosomal protein uS12]-hydrogen + (sulfur carrier)-H + 5'-deoxyadenosine + L-methionine + A + S-adenosyl-L-homocysteine + 2 H(+). Its function is as follows. Catalyzes the methylthiolation of an aspartic acid residue of ribosomal protein uS12. In Shewanella sp. (strain ANA-3), this protein is Ribosomal protein uS12 methylthiotransferase RimO.